Reading from the N-terminus, the 119-residue chain is Large ribosomal subunit protein uL18 (119 aa).

Residues 1–20 are disordered; sequence MISKPDKNKTRQKRHTRVRG. Basic residues predominate over residues 10 to 20; it reads TRQKRHTRVRG.

The protein belongs to the universal ribosomal protein uL18 family. In terms of assembly, part of the 50S ribosomal subunit; part of the 5S rRNA/L5/L18/L25 subcomplex. Contacts the 5S and 23S rRNAs.

This is one of the proteins that bind and probably mediate the attachment of the 5S RNA into the large ribosomal subunit, where it forms part of the central protuberance. This chain is Large ribosomal subunit protein uL18, found in Latilactobacillus sakei subsp. sakei (strain 23K) (Lactobacillus sakei subsp. sakei).